The following is a 673-amino-acid chain: MLLLEHESKALLEKYGIKTAKCIFCETEEQAVKAAKEIGFPVVMKVAGREIVHKSDVGGVILNVKSEDEVREVFQRLMSIPKAEGVNIQPQLEKGIEVIVGVAENEQFGSVAMFGLGGVFVEVLKDVSFRLLPLTRRDAEEMVREVKGYKLLEGYRRVKGDVGAVVDLLLKLNEVVERESIVEMDLNPVFVYERGAVVADARIVVGERKRFDYTIPDLRDLFYPKSVAVIGASRTVGKPGFNIVWNLKQNGFMGKIYPVNPNADKILELKCYPSILDIPDEVDMAIIAVPAKIVPEVMAECAQKGIKGAVIVSSGFSEEGEKGAEYERRVLEIAKKHGIRIFGPNTTGVLNTENGFITSFAIQPVIKKGNIGIIAQTGLFLGIMMDIVTSNHPSIGFSKIVGMGNKIDVEDYEVLDFLLKDEQTKVIGIYMEGIKNGRAFYDVASSAEKPIVVFKSGRTEYGQKAAMSHTASICGDDDVFDAVCRQANLVRVYSFDELFDVTKAFSLQPLPKGDRVAIIHYTGSGCVQGSDAAYFAGLKLAEFSKDTVDKISEVTPEWHNVNNPIDIWPMVEYYGAFKAYQTAIEAVMEDEGVDSVIACVWANRLINADFEPDYKSLKKYGKPIYFCVEGARDVVFDHKNALELNGIPVYTNVINAVNVLGKVTKYAKRRIQS.

The ATP-grasp domain maps to K9–K45. An ATP-binding site is contributed by A35–V46.

This sequence in the N-terminal section; belongs to the acetate CoA ligase beta subunit family. The protein in the C-terminal section; belongs to the acetate CoA ligase alpha subunit family. In terms of assembly, homodimer.

It catalyses the reaction acetate + ATP + CoA = acetyl-CoA + ADP + phosphate. With respect to regulation, activity requires divalent metal cations. Catalyzes the reversible conversion of a variety of acids to the corresponding acyl-CoA esters. Shows the highest activity with the aryl acids, indoleacetate and phenylacetate, as compared to acetate. In the reverse direction, phenylacetyl-CoA is the best substrate. Seems to be involved primarily in the degradation of aryl-CoA esters to the corresponding acids. Participates in the degradation of branched-chain amino acids via branched-chain-acyl-CoA esters. This Archaeoglobus fulgidus (strain ATCC 49558 / DSM 4304 / JCM 9628 / NBRC 100126 / VC-16) protein is Acetate--CoA ligase [ADP-forming] II.